The primary structure comprises 1132 residues: Rho GTPase-activating protein gacE (1132 aa).

Positions 76–262 constitute a Rho-GAP domain; it reads LEMNKILKSE…FLISNYLNVF (187 aa). 2 disordered regions span residues 279–354 and 472–517; these read NELL…SSPI and NSTT…SLIN. The span at 281-301 shows a compositional bias: low complexity; that stretch reads LLNNNNNNNNVIMPTTTTTTT. Residues 302–311 show a composition bias toward polar residues; it reads SASSSILPTD. 3 stretches are compositionally biased toward low complexity: residues 328–354, 473–498, and 507–517; these read SIPL…SSPI, STTT…STTT, and SNSASNNSLIN.

It is found in the cytoplasm. In terms of biological role, rho GTPase-activating protein involved in the signal transduction pathway. The sequence is that of Rho GTPase-activating protein gacE (gacE) from Dictyostelium discoideum (Social amoeba).